Consider the following 433-residue polypeptide: Glutamate-1-semialdehyde 2,1-aminomutase (433 aa).

Lys-273 is subject to N6-(pyridoxal phosphate)lysine.

This sequence belongs to the class-III pyridoxal-phosphate-dependent aminotransferase family. HemL subfamily. Homodimer. Pyridoxal 5'-phosphate serves as cofactor.

The protein localises to the cytoplasm. It carries out the reaction (S)-4-amino-5-oxopentanoate = 5-aminolevulinate. Its pathway is porphyrin-containing compound metabolism; protoporphyrin-IX biosynthesis; 5-aminolevulinate from L-glutamyl-tRNA(Glu): step 2/2. It participates in porphyrin-containing compound metabolism; chlorophyll biosynthesis. This Gloeothece citriformis (strain PCC 7424) (Cyanothece sp. (strain PCC 7424)) protein is Glutamate-1-semialdehyde 2,1-aminomutase.